The sequence spans 318 residues: Glycine--tRNA ligase alpha subunit (318 aa).

The protein belongs to the class-II aminoacyl-tRNA synthetase family. As to quaternary structure, tetramer of two alpha and two beta subunits.

The protein resides in the cytoplasm. The enzyme catalyses tRNA(Gly) + glycine + ATP = glycyl-tRNA(Gly) + AMP + diphosphate. This Chelativorans sp. (strain BNC1) protein is Glycine--tRNA ligase alpha subunit.